A 94-amino-acid polypeptide reads, in one-letter code: Putative FXYD domain-containing ion transport regulator 8 (94 aa).

The signal sequence occupies residues methionine 1 to alanine 18. The Extracellular portion of the chain corresponds to serine 19–glutamine 34. The chain crosses the membrane as a helical span at residues threonine 35 to histidine 58. At arginine 59–asparagine 94 the chain is on the cytoplasmic side. The disordered stretch occupies residues glutamine 66–asparagine 94.

It belongs to the FXYD family.

The protein localises to the membrane. This is Putative FXYD domain-containing ion transport regulator 8 (FXYD6P3) from Homo sapiens (Human).